A 115-amino-acid polypeptide reads, in one-letter code: Phosphoribosyl-ATP pyrophosphatase (115 aa).

It belongs to the PRA-PH family.

The protein localises to the cytoplasm. It catalyses the reaction 1-(5-phospho-beta-D-ribosyl)-ATP + H2O = 1-(5-phospho-beta-D-ribosyl)-5'-AMP + diphosphate + H(+). The protein operates within amino-acid biosynthesis; L-histidine biosynthesis; L-histidine from 5-phospho-alpha-D-ribose 1-diphosphate: step 2/9. The chain is Phosphoribosyl-ATP pyrophosphatase from Bordetella bronchiseptica (strain ATCC BAA-588 / NCTC 13252 / RB50) (Alcaligenes bronchisepticus).